We begin with the raw amino-acid sequence, 120 residues long: MSQITSKGRRILDKKIRTFPVGFTSRKVAGHVLNISPYFLLAFSYAENKGQSAFEEIKGSNVIDMSCVICFNFSCHLFVVIFISRSTETIPTTKLLLSKYIFYCVNALELTLFLSYKSYS.

Residues 63–83 form a helical membrane-spanning segment; that stretch reads IDMSCVICFNFSCHLFVVIFI.

It is found in the membrane. This is an uncharacterized protein from Saccharomyces cerevisiae (strain ATCC 204508 / S288c) (Baker's yeast).